Reading from the N-terminus, the 232-residue chain is Large ribosomal subunit protein uL1 (232 aa).

Belongs to the universal ribosomal protein uL1 family. Part of the 50S ribosomal subunit.

Its function is as follows. Binds directly to 23S rRNA. The L1 stalk is quite mobile in the ribosome, and is involved in E site tRNA release. Protein L1 is also a translational repressor protein, it controls the translation of the L11 operon by binding to its mRNA. This chain is Large ribosomal subunit protein uL1, found in Aromatoleum aromaticum (strain DSM 19018 / LMG 30748 / EbN1) (Azoarcus sp. (strain EbN1)).